The following is a 384-amino-acid chain: Cell division protein FtsZ (384 aa).

GTP-binding positions include 20–24 (GGGGN), 107–109 (GTG), Glu-138, Arg-142, and Asn-186.

This sequence belongs to the FtsZ family. As to quaternary structure, homodimer. Polymerizes to form a dynamic ring structure in a strictly GTP-dependent manner. Interacts directly with several other division proteins.

It is found in the cytoplasm. Essential cell division protein that forms a contractile ring structure (Z ring) at the future cell division site. The regulation of the ring assembly controls the timing and the location of cell division. One of the functions of the FtsZ ring is to recruit other cell division proteins to the septum to produce a new cell wall between the dividing cells. Binds GTP and shows GTPase activity. The sequence is that of Cell division protein FtsZ from Wigglesworthia glossinidia brevipalpis.